The chain runs to 343 residues: GTPase Obg (343 aa).

Positions 1–158 (MFIDEAKIRV…FTLRLELKVL (158 aa)) constitute an Obg domain. The interval 121-140 (RGGRGNQHFATSTHQAPREH) is disordered. Positions 159–333 (ADIGIVGYPN…LKYAMAERVR (175 aa)) constitute an OBG-type G domain. GTP-binding positions include 165–172 (GYPNVGKS), 190–194 (FTTLE), 215–218 (DIPG), 286–289 (SKID), and 314–316 (SAV). The Mg(2+) site is built by serine 172 and threonine 192.

The protein belongs to the TRAFAC class OBG-HflX-like GTPase superfamily. OBG GTPase family. Monomer. Mg(2+) is required as a cofactor.

It is found in the cytoplasm. Its function is as follows. An essential GTPase which binds GTP, GDP and possibly (p)ppGpp with moderate affinity, with high nucleotide exchange rates and a fairly low GTP hydrolysis rate. Plays a role in control of the cell cycle, stress response, ribosome biogenesis and in those bacteria that undergo differentiation, in morphogenesis control. The protein is GTPase Obg of Acidobacterium capsulatum (strain ATCC 51196 / DSM 11244 / BCRC 80197 / JCM 7670 / NBRC 15755 / NCIMB 13165 / 161).